The chain runs to 309 residues: Tagatose-6-phosphate kinase (309 aa).

The protein belongs to the carbohydrate kinase PfkB family. LacC subfamily.

The catalysed reaction is D-tagatofuranose 6-phosphate + ATP = D-tagatofuranose 1,6-bisphosphate + ADP + H(+). Its pathway is carbohydrate metabolism; D-tagatose 6-phosphate degradation; D-glyceraldehyde 3-phosphate and glycerone phosphate from D-tagatose 6-phosphate: step 1/2. This is Tagatose-6-phosphate kinase from Streptococcus pneumoniae (strain Taiwan19F-14).